A 635-amino-acid chain; its full sequence is Threonine--tRNA ligase (635 aa).

The TGS domain occupies 1–61 (MIAITLPDGS…DRDVALAIIT (61 aa)). Residues 242-533 (DHRKLGKSLD…LLENHAGALP (292 aa)) form a catalytic region. Positions 333, 384, and 510 each coordinate Zn(2+).

This sequence belongs to the class-II aminoacyl-tRNA synthetase family. In terms of assembly, homodimer. The cofactor is Zn(2+).

The protein localises to the cytoplasm. It catalyses the reaction tRNA(Thr) + L-threonine + ATP = L-threonyl-tRNA(Thr) + AMP + diphosphate + H(+). Functionally, catalyzes the attachment of threonine to tRNA(Thr) in a two-step reaction: L-threonine is first activated by ATP to form Thr-AMP and then transferred to the acceptor end of tRNA(Thr). Also edits incorrectly charged L-seryl-tRNA(Thr). The chain is Threonine--tRNA ligase from Cupriavidus pinatubonensis (strain JMP 134 / LMG 1197) (Cupriavidus necator (strain JMP 134)).